The following is an 88-amino-acid chain: UPF0223 protein YktA (88 aa).

It belongs to the UPF0223 family.

In Bacillus subtilis (strain 168), this protein is UPF0223 protein YktA (yktA).